The chain runs to 551 residues: MYCVQCEQTMVTPMGNGCSFGQGMCGKTAETSDLQDLLIACLHSLSAWALKAREHGIINHDADNFAPRAFFATLTNVNFDSNRIVGYAQQAIIYRNELIKAISEVEPNPELNHPLAYIELKGISIDQLAEQAKEFALDTDRAEIGEEVHGVRLLALYGLKGAAAYLEHAYVLGKFDNDLYVEYHGFMAWLGTKPRDLNELLEKSLAIGSMNFKVMAMLDAGETETFGNPVPATVNIRPVKGKCILISGHDLKDLKELLEQTEGKGINVYTHGEMLPAHGYPELKKYKHLVGNYGSGWQNQQKEFARFPGAIVMTSNCLIDPNVGDYADRIFTCNIVGWPGVVHLEKHNFAPVIEKALECDGFPYTELEHYITVGFGRKTLIDASDAVIDLVKAGKLSHVFVIGGCDGDKEERHYYTDLAYALPKDTAVLTLGCGKYRFNKLDFGTIDGGLPRLLDAGQCNDTYSAIMLAVTLSQKLGIGLNELPLSIVLSWFEQKAIIVLLTLLALGVKNVYSGPSKPAFLNDNVMNLLHEKFGLSGLTTPEQDFGHIINK.

4 residues coordinate [2Fe-2S] cluster: Cys-3, Cys-6, Cys-18, and Cys-25. 8 residues coordinate hybrid [4Fe-2O-2S] cluster: His-249, Glu-273, Cys-317, Cys-405, Cys-433, Cys-459, Glu-493, and Lys-495. At Cys-405 the chain carries Cysteine persulfide.

It belongs to the HCP family. The cofactor is [2Fe-2S] cluster. It depends on hybrid [4Fe-2O-2S] cluster as a cofactor.

It is found in the cytoplasm. It catalyses the reaction A + NH4(+) + H2O = hydroxylamine + AH2 + H(+). In terms of biological role, catalyzes the reduction of hydroxylamine to form NH(3) and H(2)O. This is Hydroxylamine reductase from Actinobacillus pleuropneumoniae serotype 7 (strain AP76).